Reading from the N-terminus, the 407-residue chain is Tryptophan synthase beta chain (407 aa).

The residue at position 91 (Lys91) is an N6-(pyridoxal phosphate)lysine.

This sequence belongs to the TrpB family. Tetramer of two alpha and two beta chains. The cofactor is pyridoxal 5'-phosphate.

It carries out the reaction (1S,2R)-1-C-(indol-3-yl)glycerol 3-phosphate + L-serine = D-glyceraldehyde 3-phosphate + L-tryptophan + H2O. The protein operates within amino-acid biosynthesis; L-tryptophan biosynthesis; L-tryptophan from chorismate: step 5/5. The beta subunit is responsible for the synthesis of L-tryptophan from indole and L-serine. The protein is Tryptophan synthase beta chain of Streptococcus pneumoniae (strain JJA).